Consider the following 512-residue polypeptide: MKRALVSVSDKNNLVPFVKKLVEHDFEIVSTGGTKKYLDEAGIKTISVEEVTHFPEILDGRVKTLNPYIHGGLLARRELPEHMETLKEQNITPIDLVCVNLYPFKQTIENPEVTLENAIENIDIGGPSMLRSAAKNYRDVVVVVDADDYEGLEKELDENGEISLETRFKLSAKTFRHTAAYDALIADYLSKQAGEDNPEKLTLTYDLISSMRYGENSHQKAWFYEDAMPKAYSITQAKQLNGKKLSFNNIRDADAAIRAVREFDGPTVVALKHMNPCGIGQADNIELAWDRAYEADSISIFGGVIALNRKVDLATAEKMHKLFLEIIIAPEFDADALEVLSKKKNLRLLQLDFTKKDEDVRDETVSIMGGLLRQEQDVIDENPKNWEVVTENAPSDSQLETLLFAWKAVKHTKSNAIVVANDERTLGIGAGQPNRIDSTKIAIKHAGDSLNDKAVLASDAFFPMDDCVQYAAEHGIKAIVQPGGSIRDKDSIAMANKYGVAMVFTGVRHFRH.

Positions 1-144 constitute an MGS-like domain; the sequence is MKRALVSVSD…KNYRDVVVVV (144 aa).

This sequence belongs to the PurH family.

The catalysed reaction is (6R)-10-formyltetrahydrofolate + 5-amino-1-(5-phospho-beta-D-ribosyl)imidazole-4-carboxamide = 5-formamido-1-(5-phospho-D-ribosyl)imidazole-4-carboxamide + (6S)-5,6,7,8-tetrahydrofolate. The enzyme catalyses IMP + H2O = 5-formamido-1-(5-phospho-D-ribosyl)imidazole-4-carboxamide. It participates in purine metabolism; IMP biosynthesis via de novo pathway; 5-formamido-1-(5-phospho-D-ribosyl)imidazole-4-carboxamide from 5-amino-1-(5-phospho-D-ribosyl)imidazole-4-carboxamide (10-formyl THF route): step 1/1. Its pathway is purine metabolism; IMP biosynthesis via de novo pathway; IMP from 5-formamido-1-(5-phospho-D-ribosyl)imidazole-4-carboxamide: step 1/1. The sequence is that of Bifunctional purine biosynthesis protein PurH from Ligilactobacillus salivarius (strain UCC118) (Lactobacillus salivarius).